Consider the following 1038-residue polypeptide: Activated CDC42 kinase 1 (1038 aa).

An SAM-like domain region spans residues 1–110 (MQPEEGTGWL…TSPAPGGPAG (110 aa)). Positions 90 to 114 (PPHHSQSTFRKTSPAPGGPAGEGPL) are disordered. A Protein kinase domain is found at 126 to 385 (LRLLEKLGDG…PTFVALRDFL (260 aa)). Residues 132 to 140 (LGDGSFGVV) and K158 each bind ATP. The Proton acceptor role is filled by D252. Y284 carries the phosphotyrosine; by SRC and autocatalysis modification. The SH3 domain occupies 388–448 (AQPTDMRALQ…PRNVVTSVAG (61 aa)). The CRIB domain maps to 454–466 (ISQPLQNSFIHTG). A disordered region spans residues 497–535 (LSVELSTSRPPQHLGGVKKPTYDPVSEDQDPLSSDFKRL). At Y518 the chain carries Phosphotyrosine. The required for interaction with SRC stretch occupies residues 623–652 (DWDARPLPPPPAYDDVAQDEDDFEICSINS). Residues 632-635 (PPAY) form a required for interaction with NEDD4 region. 2 disordered regions span residues 659 to 702 (VPAG…SSAQ) and 718 to 840 (LQAP…GPRA). S724 carries the phosphoserine modification. An EBD domain region spans residues 733–876 (GDDKPQVPPR…SYLERYQRFL (144 aa)). Composition is skewed to pro residues over residues 738–749 (QVPPRVPIPPRP), 772–783 (PASPPRVPPREP), and 794–805 (PLVPPGSSPLPP). The residue at position 827 (Y827) is a Phosphotyrosine. R839 carries the omega-N-methylarginine modification. Phosphotyrosine occurs at positions 859 and 872. S881 is modified (phosphoserine). The interval 917–957 (LDPKANFSTNNSNPGARPPPPRATARLPQRGCPGDGPEAGR) is disordered. Residues 958–996 (PADKIQMAMVHGVTTEECQAALQCHGWSVQRAAQYLKVE) enclose the UBA domain.

This sequence belongs to the protein kinase superfamily. Tyr protein kinase family. Interacts with NEDD4 (via WW3 domain). NEDD4L and EGF promote association with NEDD4. Homodimer. Interacts with AR, CDC42, WWASL and WWOX. Interacts with CSPG4 (activated). Interacts with MERTK (activated); stimulates autophosphorylation. May interact (phosphorylated) with HSP90AB1; maintains kinase activity. Interacts with NPHP1. Interacts with SNX9 (via SH3 domain). Interacts with SRC (via SH2 and SH3 domain). Interacts with EGFR, and this interaction is dependent on EGF stimulation and kinase activity of EGFR. Interacts (via kinase domain) with AKT1. Part of a collagen stimulated complex involved in cell migration composed of CDC42, CRK, TNK2 and BCAR1/p130cas. Interacts with BCAR1/p130cas via SH3 domains. Forms complexes with GRB2 and numerous receptor tyrosine kinases (RTK) including LTK, AXL or PDGFRL, in which GRB2 promotes RTK recruitment by TNK2. Requires Mg(2+) as cofactor. Post-translationally, autophosphorylation regulates kinase activity. Phosphorylation on Tyr-518 is required for interaction with SRC and is observed during association with clathrin-coated pits. Polyubiquitinated by NEDD4 and NEDD4L. Degradation can be induced by EGF and is lysosome-dependent. The Tyr-284 phosphorylated form shows a significant increase in expression in breast cancers during the progressive stages i.e. normal to hyperplasia (ADH), ductal carcinoma in situ (DCIS), invasive ductal carcinoma (IDC) and lymph node metastatic (LNMM) stages. It also shows a significant increase in expression in prostate cancers during the progressive stages.

It is found in the cell membrane. It localises to the nucleus. The protein localises to the endosome. The protein resides in the cell junction. Its subcellular location is the adherens junction. It is found in the cytoplasmic vesicle membrane. It localises to the cytoplasmic vesicle. The protein localises to the clathrin-coated vesicle. The protein resides in the membrane. Its subcellular location is the clathrin-coated pit. It is found in the cytoplasm. It localises to the perinuclear region. The protein localises to the cytosol. It carries out the reaction L-tyrosyl-[protein] + ATP = O-phospho-L-tyrosyl-[protein] + ADP + H(+). It catalyses the reaction L-seryl-[protein] + ATP = O-phospho-L-seryl-[protein] + ADP + H(+). The catalysed reaction is L-threonyl-[protein] + ATP = O-phospho-L-threonyl-[protein] + ADP + H(+). With respect to regulation, inhibited by AIM-100 (4-amino-5,6-biaryl-furo[2,3-d]pyrimidine), which suppresses activating phosphorylation at Tyr-284. Repressed by dasatinib. In terms of biological role, non-receptor tyrosine-protein and serine/threonine-protein kinase that is implicated in cell spreading and migration, cell survival, cell growth and proliferation. Transduces extracellular signals to cytosolic and nuclear effectors. Phosphorylates AKT1, AR, MCF2, WASL and WWOX. Implicated in trafficking and clathrin-mediated endocytosis through binding to epidermal growth factor receptor (EGFR) and clathrin. Binds to both poly- and mono-ubiquitin and regulates ligand-induced degradation of EGFR, thereby contributing to the accumulation of EGFR at the limiting membrane of early endosomes. Downstream effector of CDC42 which mediates CDC42-dependent cell migration via phosphorylation of BCAR1. May be involved both in adult synaptic function and plasticity and in brain development. Activates AKT1 by phosphorylating it on 'Tyr-176'. Phosphorylates AR on 'Tyr-267' and 'Tyr-363' thereby promoting its recruitment to androgen-responsive enhancers (AREs). Phosphorylates WWOX on 'Tyr-287'. Phosphorylates MCF2, thereby enhancing its activity as a guanine nucleotide exchange factor (GEF) toward Rho family proteins. Contributes to the control of AXL receptor levels. Confers metastatic properties on cancer cells and promotes tumor growth by negatively regulating tumor suppressor such as WWOX and positively regulating pro-survival factors such as AKT1 and AR. Phosphorylates WASP. The chain is Activated CDC42 kinase 1 (TNK2) from Homo sapiens (Human).